We begin with the raw amino-acid sequence, 1918 residues long: Diacylglycerol kinase eta (1918 aa).

Residues 1–10 show a composition bias toward basic and acidic residues; the sequence is MAHLKLDTLH. The interval 1 to 37 is disordered; the sequence is MAHLKLDTLHVQRSPRGSRRSSPSSGRSSACSSGSIS. Residues 20–37 show a composition bias toward low complexity; it reads RSSPSSGRSSACSSGSIS. A PH domain is found at 82–175; the sequence is AIIKEGFLLK…WLGGLKTATA (94 aa). 2 Phorbol-ester/DAG-type zinc fingers span residues 195–245 and 268–319; these read HHHW…IANC and PHQW…AVAC. One can recognise a DAGKc domain in the interval 350-486; that stretch reads GNFSPLLVFV…DRWSIMVFEK (137 aa). 4 disordered regions span residues 783 to 805, 1017 to 1067, 1177 to 1212, and 1380 to 1399; these read GANI…NTPT, TTLC…DDNP, PNTI…GDSI, and ERDK…TEEA. Positions 1177–1189 are enriched in polar residues; that stretch reads PNTILTTSTSPTK. Positions 1855–1918 constitute an SAM domain; sequence WSVNEVVTWL…LQAIKDLSEN (64 aa).

The protein belongs to the eukaryotic diacylglycerol kinase family.

The protein localises to the cytoplasm. The catalysed reaction is a 1,2-diacyl-sn-glycerol + ATP = a 1,2-diacyl-sn-glycero-3-phosphate + ADP + H(+). Its function is as follows. Phosphorylates diacylglycerol (DAG) to generate phosphatidic acid (PA). The polypeptide is Diacylglycerol kinase eta (Drosophila erecta (Fruit fly)).